The chain runs to 143 residues: Large ribosomal subunit protein uL11 (143 aa).

This sequence belongs to the universal ribosomal protein uL11 family. Part of the ribosomal stalk of the 50S ribosomal subunit. Interacts with L10 and the large rRNA to form the base of the stalk. L10 forms an elongated spine to which L12 dimers bind in a sequential fashion forming a multimeric L10(L12)X complex. One or more lysine residues are methylated.

Forms part of the ribosomal stalk which helps the ribosome interact with GTP-bound translation factors. This chain is Large ribosomal subunit protein uL11, found in Pseudomonas fluorescens (strain SBW25).